The following is a 200-amino-acid chain: MGRLHCTQDPVPEAVRGDMQQLNQLGAQQFSDLTEVLFHFLTEPKEVERFLAQLSEFATSNQISLGPLKSIMKSLLLVPNGALKKGLTAEQVRTDLQTLGLSEEKATYFSEKWKQNASTLAQWAMGQTLMVNQLIDMEWRFGVTSGSSELEKVGSIFLQLKLVVKKGKQTENLYMELTLPQFYSFLHEMERVRASMECLS.

The COMM domain occupies 133–200 (QLIDMEWRFG…RVRASMECLS (68 aa)).

Belongs to the COMM domain-containing protein 7 family. In terms of assembly, component of the commander complex consisting of the CCC subcomplex and the retriever subcomplex. Component of the CCC (COMMD/CCDC22/CCDC93) subcomplex consisting of COMMD1, COMMD2, COMMD3, COMMD4, COMMD5, COMMD6, COMMD7, COMMD8, COMMD9, COMMD10, CCDC22 and CCDC93; within the complex forms a heterodimer with COMMD9. Interacts with RELA. Interacts with CCDC22, CCDC93, SCNN1B, CUL7.

It is found in the cytoplasmic vesicle. Functionally, scaffold protein in the commander complex that is essential for endosomal recycling of transmembrane cargos; the commander complex is composed of the CCC subcomplex and the retriever subcomplex. May modulate activity of cullin-RING E3 ubiquitin ligase (CRL) complexes. Associates with the NF-kappa-B complex and suppresses its transcriptional activity. In Mus musculus (Mouse), this protein is COMM domain-containing protein 7 (Commd7).